Reading from the N-terminus, the 240-residue chain is DUP240 protein DFP1 (240 aa).

The interval Met-1–Glu-29 is disordered. A run of 2 helical transmembrane segments spans residues Ile-61 to Phe-81 and Val-84 to Ile-104.

The protein belongs to the DUP/COS family.

It localises to the membrane. The protein is DUP240 protein DFP1 of Saccharomyces cerevisiae (Baker's yeast).